Reading from the N-terminus, the 227-residue chain is Cytochrome c oxidase subunit 2 (227 aa).

The Mitochondrial intermembrane segment spans residues 1-14; that stretch reads MAYPFQLGLQDATS. The helical transmembrane segment at 15–45 threads the bilayer; sequence PIMEELTNFHDHTLMIVFLISSLVLYIISLM. Over 46-59 the chain is Mitochondrial matrix; that stretch reads LTTKLTHTSTMDAQ. A helical transmembrane segment spans residues 60–87; sequence EVETIWTILPAAILILIALPSLRILYMM. The Mitochondrial intermembrane segment spans residues 88–227; that stretch reads DEINNPVLTV…YFENWSTSMI (140 aa). The Cu cation site is built by histidine 161, cysteine 196, glutamate 198, cysteine 200, histidine 204, and methionine 207. Position 198 (glutamate 198) interacts with Mg(2+). The residue at position 218 (tyrosine 218) is a Phosphotyrosine.

This sequence belongs to the cytochrome c oxidase subunit 2 family. In terms of assembly, component of the cytochrome c oxidase (complex IV, CIV), a multisubunit enzyme composed of 14 subunits. The complex is composed of a catalytic core of 3 subunits MT-CO1, MT-CO2 and MT-CO3, encoded in the mitochondrial DNA, and 11 supernumerary subunits COX4I, COX5A, COX5B, COX6A, COX6B, COX6C, COX7A, COX7B, COX7C, COX8 and NDUFA4, which are encoded in the nuclear genome. The complex exists as a monomer or a dimer and forms supercomplexes (SCs) in the inner mitochondrial membrane with NADH-ubiquinone oxidoreductase (complex I, CI) and ubiquinol-cytochrome c oxidoreductase (cytochrome b-c1 complex, complex III, CIII), resulting in different assemblies (supercomplex SCI(1)III(2)IV(1) and megacomplex MCI(2)III(2)IV(2)). Found in a complex with TMEM177, COA6, COX18, COX20, SCO1 and SCO2. Interacts with TMEM177 in a COX20-dependent manner. Interacts with COX20. Interacts with COX16. It depends on Cu cation as a cofactor.

The protein localises to the mitochondrion inner membrane. It catalyses the reaction 4 Fe(II)-[cytochrome c] + O2 + 8 H(+)(in) = 4 Fe(III)-[cytochrome c] + 2 H2O + 4 H(+)(out). Functionally, component of the cytochrome c oxidase, the last enzyme in the mitochondrial electron transport chain which drives oxidative phosphorylation. The respiratory chain contains 3 multisubunit complexes succinate dehydrogenase (complex II, CII), ubiquinol-cytochrome c oxidoreductase (cytochrome b-c1 complex, complex III, CIII) and cytochrome c oxidase (complex IV, CIV), that cooperate to transfer electrons derived from NADH and succinate to molecular oxygen, creating an electrochemical gradient over the inner membrane that drives transmembrane transport and the ATP synthase. Cytochrome c oxidase is the component of the respiratory chain that catalyzes the reduction of oxygen to water. Electrons originating from reduced cytochrome c in the intermembrane space (IMS) are transferred via the dinuclear copper A center (CU(A)) of subunit 2 and heme A of subunit 1 to the active site in subunit 1, a binuclear center (BNC) formed by heme A3 and copper B (CU(B)). The BNC reduces molecular oxygen to 2 water molecules using 4 electrons from cytochrome c in the IMS and 4 protons from the mitochondrial matrix. This is Cytochrome c oxidase subunit 2 (MT-CO2) from Arvicanthis somalicus (Neumann's grass rat).